The sequence spans 432 residues: Amino-acid acetyltransferase (432 aa).

The 140-residue stretch at 286-425 (ERVREAAIED…ASLYNYQRNS (140 aa)) folds into the N-acetyltransferase domain.

It belongs to the acetyltransferase family. ArgA subfamily.

The protein resides in the cytoplasm. The enzyme catalyses L-glutamate + acetyl-CoA = N-acetyl-L-glutamate + CoA + H(+). It functions in the pathway amino-acid biosynthesis; L-arginine biosynthesis; N(2)-acetyl-L-ornithine from L-glutamate: step 1/4. The protein is Amino-acid acetyltransferase of Pseudomonas fluorescens (strain ATCC BAA-477 / NRRL B-23932 / Pf-5).